Consider the following 279-residue polypeptide: Secreted RxLR effector protein 90 (279 aa).

Positions 1 to 19 (MKSAAAFATFLTLSVFVAT) are cleaved as a signal peptide. The RxLR-dEER motif lies at 29–46 (RGLRSLADNQSTESSEGR). Disordered regions lie at residues 29–53 (RGLRSLADNQSTESSEGRKDHYNHH) and 135–176 (ATPA…NLAG). The N-linked (GlcNAc...) asparagine glycan is linked to Asn37. A compositionally biased stretch (low complexity) spans 135–146 (ATPAPTTSVPSS). Over residues 147 to 163 (LVNTDTSDNQLPTTPVA) the composition is skewed to polar residues. Positions 166–176 (QGGGIGSNLAG) are enriched in gly residues. A glycan (N-linked (GlcNAc...) asparagine) is linked at Asn217.

Belongs to the RxLR effector family.

The protein localises to the secreted. It is found in the host cell membrane. Functionally, secreted effector that completely suppresses the host cell death induced by cell death-inducing proteins. The polypeptide is Secreted RxLR effector protein 90 (Plasmopara viticola (Downy mildew of grapevine)).